The sequence spans 161 residues: Large-conductance mechanosensitive channel (161 aa).

Transmembrane regions (helical) follow at residues 14 to 34 (VVDM…VNTL) and 85 to 105 (GLFL…FILV).

It belongs to the MscL family. As to quaternary structure, homopentamer.

It is found in the cell inner membrane. Channel that opens in response to stretch forces in the membrane lipid bilayer. May participate in the regulation of osmotic pressure changes within the cell. The polypeptide is Large-conductance mechanosensitive channel (Chlorobium luteolum (strain DSM 273 / BCRC 81028 / 2530) (Pelodictyon luteolum)).